The chain runs to 229 residues: MCGYQVRIHDMPSEDRPRERLLKHGPGFLSNAELLSVILRTGSKDENVVSMSSRILSEYNLKQLSQANISQLTKIRGIGPAKASQIAALFELARKLEIFTDDPKRKIRSANDVYSLLYPRHRELKKEHLTALYLDTKNNIIKEEVISIGSLNANIVHPREVFKSALMESSASVILTHNHPSGDPAPSREDIAVTEKLVEGGKILGISVLDHVIIGDGRYVSLKEEGYIS.

Residues 106-228 form the MPN domain; it reads KIRSANDVYS…YVSLKEEGYI (123 aa). Residues H177, H179, and D190 each contribute to the Zn(2+) site. A JAMM motif motif is present at residues 177-190; the sequence is HNHPSGDPAPSRED.

Belongs to the UPF0758 family.

This chain is UPF0758 protein Mbur_0382, found in Methanococcoides burtonii (strain DSM 6242 / NBRC 107633 / OCM 468 / ACE-M).